We begin with the raw amino-acid sequence, 690 residues long: Proprotein convertase subtilisin/kexin type 9 (690 aa).

A signal peptide spans 1 to 28; sequence MGTVRSRRLWWPLPLLLLLLRGPAGARA. The propeptide occupies 29-150; that stretch reads QEDDDGDYEE…IEEDSYVFAQ (122 aa). The residue at position 36 (Tyr-36) is a Sulfotyrosine. Ser-45 is subject to Phosphoserine. One can recognise an Inhibitor I9 domain in the interval 75–147; that stretch reads TYVVVLKEET…VDYIEEDSYV (73 aa). The Peptidase S8 domain maps to 153–459; that stretch reads PWNLERITPA…GWQLFCRTVW (307 aa). Residues Asp-184 and His-224 each act as charge relay system in the active site. 2 cysteine pairs are disulfide-bonded: Cys-221-Cys-253 and Cys-321-Cys-356. Residue Ser-384 is the Charge relay system of the active site. The tract at residues 448 to 690 is C-terminal domain; that stretch reads GAGWQLFCRT…HLAQASQELQ (243 aa). Intrachain disulfides connect Cys-455-Cys-525, Cys-475-Cys-524, and Cys-484-Cys-507. Asn-531 is a glycosylation site (N-linked (GlcNAc...) asparagine). 6 cysteine pairs are disulfide-bonded: Cys-532–Cys-599, Cys-550–Cys-598, Cys-560–Cys-586, Cys-606–Cys-677, Cys-624–Cys-676, and Cys-633–Cys-652. Position 686 is a phosphoserine (Ser-686).

Belongs to the peptidase S8 family. As to quaternary structure, monomer. Can self-associate to form dimers and higher multimers which may have increased LDLR degrading activity. The precursor protein but not the mature protein may form multimers. Interacts with APOB, VLDLR, LRP8/APOER2 and BACE1. The full-length immature form (pro-PCSK9) interacts with SCNN1A, SCNN1B and SCNN1G. The pro-PCSK9 form (via C-terminal domain) interacts with LDLR. Interacts (via the C-terminal domain) with ANXA2 (via repeat Annexin 1); the interaction inhibits the degradation of LDLR. Requires Ca(2+) as cofactor. Cleavage by furin and PCSK5 generates a truncated inactive protein that is unable to induce LDLR degradation. Post-translationally, undergoes autocatalytic cleavage in the endoplasmic reticulum to release the propeptide from the N-terminus and the cleavage of the propeptide is strictly required for its maturation and activation. The cleaved propeptide however remains associated with the catalytic domain through non-covalent interactions, preventing potential substrates from accessing its active site. As a result, it is secreted from cells as a propeptide-containing, enzymatically inactive protein. In terms of processing, phosphorylation protects the propeptide against proteolysis.

It is found in the cytoplasm. Its subcellular location is the secreted. The protein resides in the endosome. The protein localises to the lysosome. It localises to the cell surface. It is found in the endoplasmic reticulum. Its subcellular location is the golgi apparatus. Its proteolytic activity is autoinhibited by the non-covalent binding of the propeptide to the catalytic domain. Inhibited by EGTA. Functionally, crucial player in the regulation of plasma cholesterol homeostasis. Binds to low-density lipid receptor family members: low density lipoprotein receptor (LDLR), very low density lipoprotein receptor (VLDLR), apolipoprotein E receptor (LRP1/APOER) and apolipoprotein receptor 2 (LRP8/APOER2), and promotes their degradation in intracellular acidic compartments. Acts via a non-proteolytic mechanism to enhance the degradation of the hepatic LDLR through a clathrin LDLRAP1/ARH-mediated pathway. May prevent the recycling of LDLR from endosomes to the cell surface or direct it to lysosomes for degradation. Can induce ubiquitination of LDLR leading to its subsequent degradation. Inhibits intracellular degradation of APOB via the autophagosome/lysosome pathway in a LDLR-independent manner. Involved in the disposal of non-acetylated intermediates of BACE1 in the early secretory pathway. Inhibits epithelial Na(+) channel (ENaC)-mediated Na(+) absorption by reducing ENaC surface expression primarily by increasing its proteasomal degradation. Regulates neuronal apoptosis via modulation of LRP8/APOER2 levels and related anti-apoptotic signaling pathways. The chain is Proprotein convertase subtilisin/kexin type 9 (PCSK9) from Ateles geoffroyi (Black-handed spider monkey).